A 436-amino-acid chain; its full sequence is Transcription factor Sox-10 (436 aa).

5 disordered regions span residues 1-55 (MSDD…ERFP), 145-183 (RLRM…AEGG), 195-257 (HLDH…DFGN), 322-346 (PQTD…QPST), and 413-436 (SPSV…LSRP). Residue K44 forms a Glycyl lysine isopeptide (Lys-Gly) (interchain with G-Cter in SUMO) linkage. Residues 48-88 (DSEDERFPVCIREAVSQVLSGYDWTLVPMPVRVNGGSKSKP) are dimerization (DIM). A DNA-binding region (HMG box) is located at residues 90–158 (VKRPMNAFMV…QHKKDHPDYK (69 aa)). Positions 145–159 (RLRMQHKKDHPDYKY) are enriched in basic and acidic residues. 2 stretches are compositionally biased toward polar residues: residues 205-215 (SDGNSEHSAGQ) and 331-346 (KTES…QPST). Residues 209 to 295 (SEHSAGQSHG…NGHAGHPSHI (87 aa)) are transactivation domain (TAM). A transactivation domain (TAC) region spans residues 327–436 (KAQVKTESSS…QPVYTTLSRP (110 aa)). K331 is covalently cross-linked (Glycyl lysine isopeptide (Lys-Gly) (interchain with G-Cter in SUMO)).

As to quaternary structure, interacts with the sumoylation factors ube2i/ubc9 and sumo1. Post-translationally, sumoylated.

Its subcellular location is the cytoplasm. It localises to the nucleus. In terms of biological role, acts early in neural crest formation, functioning redundantly with the other group E Sox factors sox8 and sox9 to induce neural crest progenitors. Acts downstream of wnt-signaling at the neural plate border. Involved in the specification of neural crest progenitors fated to form the pigment cell lineage. This Xenopus tropicalis (Western clawed frog) protein is Transcription factor Sox-10.